We begin with the raw amino-acid sequence, 443 residues long: Proline--tRNA ligase (443 aa).

Belongs to the class-II aminoacyl-tRNA synthetase family. ProS type 2 subfamily. Homodimer.

The protein resides in the cytoplasm. It carries out the reaction tRNA(Pro) + L-proline + ATP = L-prolyl-tRNA(Pro) + AMP + diphosphate. Its function is as follows. Catalyzes the attachment of proline to tRNA(Pro) in a two-step reaction: proline is first activated by ATP to form Pro-AMP and then transferred to the acceptor end of tRNA(Pro). The chain is Proline--tRNA ligase from Zymomonas mobilis subsp. mobilis (strain ATCC 31821 / ZM4 / CP4).